A 425-amino-acid polypeptide reads, in one-letter code: GTPase Obg (425 aa).

The region spanning 1–158 is the Obg domain; sequence MFIDKAKIYV…REIILELKLL (158 aa). The 173-residue stretch at 159 to 331 folds into the OBG-type G domain; sequence ADVGLVGFPN…LMAEVSKTLA (173 aa). GTP is bound by residues 165–172, 190–194, 212–215, 282–285, and 312–314; these read GFPNVGKS, FTTLK, DIPG, NKSD, and SAA. Residues serine 172 and threonine 192 each coordinate Mg(2+). The OCT domain maps to 345–425; that stretch reads LFIPEEKRFT…LNDFEFEFVI (81 aa).

The protein belongs to the TRAFAC class OBG-HflX-like GTPase superfamily. OBG GTPase family. Monomer. Mg(2+) serves as cofactor.

It localises to the cytoplasm. In terms of biological role, an essential GTPase which binds GTP, GDP and possibly (p)ppGpp with moderate affinity, with high nucleotide exchange rates and a fairly low GTP hydrolysis rate. Plays a role in control of the cell cycle, stress response, ribosome biogenesis and in those bacteria that undergo differentiation, in morphogenesis control. The sequence is that of GTPase Obg from Clostridium tetani (strain Massachusetts / E88).